A 124-amino-acid chain; its full sequence is UPF0357 protein C1687.07 (124 aa).

Positions 1–24 are cleaved as a signal peptide; the sequence is MASFHIIVSYVTVVLAIIIAITFA.

It belongs to the UPF0357 family.

The chain is UPF0357 protein C1687.07 from Schizosaccharomyces pombe (strain 972 / ATCC 24843) (Fission yeast).